The chain runs to 333 residues: Cell shape-determining protein Mbl (333 aa).

ATP contacts are provided by residues 12-14 (TAN), 156-158 (GGT), 204-207 (EDIK), and 284-287 (GGAL).

This sequence belongs to the FtsA/MreB family. Forms polymers.

It localises to the cytoplasm. In terms of biological role, forms membrane-associated dynamic filaments that are essential for cell shape determination. Acts by regulating cell wall synthesis and cell elongation, and thus cell shape. A feedback loop between cell geometry and Mbl localization may maintain elongated cell shape by targeting cell wall growth to regions of negative cell wall curvature. The protein is Cell shape-determining protein Mbl of Bacillus cereus (strain ATCC 10987 / NRS 248).